An 832-amino-acid chain; its full sequence is WD repeat-containing protein 75 (832 aa).

WD repeat units follow at residues 4 to 43 (KTDIRVVRCGGSKINFRPPIISHDSRFVLCVSGDSVKVYS), 47 to 86 (EEWLHNLQGHNNQVTGIAFNPANQLQVYSCSADGTVKLWD), 90 to 134 (GILI…QLVA), 148 to 187 (KELSTVASKISPNPSCTAFGRGGEFIAFSRHLQLNVYFFR), 196 to 233 (LKATDKKAGKNAFTCVACHPTDDCIASGHEDGKIRLWR), 239 to 278 (KEYTYSTKHWHHDAVNHLCFTPEGSNLLSGGIESVLVQWQ), 281 to 320 (DMSKKEFLPRLGGSISHVSASADGQLFCTAHSDNKISIIE), 326 to 364 (SGLIQGLVRGDAVSTDLMIDPRSKALVLNGKPGHLQFYS), 378 to 425 (QQEY…KLWA), 432 to 474 (SFVL…KAWC), 485 to 523 (YWSCDFVGSYHNLKPKNCCFSADGSILAVSFQEVLTLWS), 527 to 567 (WELL…CCWN), and 572 to 609 (ALEWSTSVDVSRLQSDPLSENVAAFSFESKHTHLFVFK). 2 disordered regions span residues 704 to 723 (QHKLNTETQEPADKPQHTQG) and 759 to 811 (VREE…AQER). Over residues 764–785 (DSSEQEMDSEKEEEESEEEMEA) the composition is skewed to acidic residues. Residues 799-811 (DEQKPKLSKAQER) are compositionally biased toward basic and acidic residues.

In terms of assembly, component of the proposed t-UTP subcomplex of the ribosomal small subunit (SSU) processome. SSU processome is composed of more than 70 proteins and the RNA chaperone small nucleolar RNA (snoRNA) U3.

It is found in the nucleus. The protein localises to the nucleolus. In terms of biological role, ribosome biogenesis factor. Part of the small subunit (SSU) processome, first precursor of the small eukaryotic ribosomal subunit. During the assembly of the SSU processome in the nucleolus, many ribosome biogenesis factors, an RNA chaperone and ribosomal proteins associate with the nascent pre-rRNA and work in concert to generate RNA folding, modifications, rearrangements and cleavage as well as targeted degradation of pre-ribosomal RNA by the RNA exosome. Involved in nucleolar processing of pre-18S ribosomal RNA. Required for optimal pre-ribosomal RNA transcription by RNA polymerase I. The chain is WD repeat-containing protein 75 (wdr75) from Danio rerio (Zebrafish).